The primary structure comprises 283 residues: MKIIKNASQMQKIALRHIKNGDEIGLVPTMGALHEGHISLIAKSVKNDDITIVSIFVNPIQFGPNEDYLKYPRPVKKDKEICKKNHVDYVFMPSVNDMFPADHKTFIEVKTLQDILCGAFRINHFKGVATVIAKLFNISCADRAYFGMKDFQQLKIIEKMGKDLNFRTKIIPCSIVRERNGLALSSRNSYLSAEGKKRSLNISKSLKEAAEDFKRRDLNFVKKTVINKLKKIPGSEIDYAEIVNFDDLLPADKNTKKAVFAVAVWIGKTRLIDNIMMIKDKDS.

An ATP-binding site is contributed by 30-37; the sequence is MGALHEGH. Residue histidine 37 is the Proton donor of the active site. Residue glutamine 61 coordinates (R)-pantoate. A beta-alanine-binding site is contributed by glutamine 61. 147–150 is an ATP binding site; sequence GMKD. Glutamine 153 provides a ligand contact to (R)-pantoate. ATP contacts are provided by residues valine 176 and 184 to 187; that span reads LSSR.

The protein belongs to the pantothenate synthetase family. As to quaternary structure, homodimer.

It localises to the cytoplasm. It catalyses the reaction (R)-pantoate + beta-alanine + ATP = (R)-pantothenate + AMP + diphosphate + H(+). The protein operates within cofactor biosynthesis; (R)-pantothenate biosynthesis; (R)-pantothenate from (R)-pantoate and beta-alanine: step 1/1. In terms of biological role, catalyzes the condensation of pantoate with beta-alanine in an ATP-dependent reaction via a pantoyl-adenylate intermediate. This Endomicrobium trichonymphae protein is Pantothenate synthetase.